The primary structure comprises 101 residues: Urease subunit beta (101 aa).

The protein belongs to the urease beta subunit family. Heterotrimer of UreA (gamma), UreB (beta) and UreC (alpha) subunits. Three heterotrimers associate to form the active enzyme.

The protein resides in the cytoplasm. The catalysed reaction is urea + 2 H2O + H(+) = hydrogencarbonate + 2 NH4(+). It participates in nitrogen metabolism; urea degradation; CO(2) and NH(3) from urea (urease route): step 1/1. The polypeptide is Urease subunit beta (Burkholderia cenocepacia (strain ATCC BAA-245 / DSM 16553 / LMG 16656 / NCTC 13227 / J2315 / CF5610) (Burkholderia cepacia (strain J2315))).